Here is a 129-residue protein sequence, read N- to C-terminus: Dormancy-associated protein 2 (129 aa).

Residues 1–25 (MDSRKAMLILGLLAMVLLISSEVSA) form the signal peptide. The disordered stretch occupies residues 110-129 (GGYHGGGGHGGHGGASNNGN).

The protein belongs to the DRM1/ARP family. Expressed in axilary buds. Detected in growing stems, leaflets and floral organs, but not in roots.

The polypeptide is Dormancy-associated protein 2 (Pisum sativum (Garden pea)).